We begin with the raw amino-acid sequence, 297 residues long: 4-diphosphocytidyl-2-C-methyl-D-erythritol kinase (297 aa).

Lys22 is an active-site residue. ATP is bound at residue 111–121 (PSQAGMGGGSS). The active site involves Asp153.

It belongs to the GHMP kinase family. IspE subfamily.

It catalyses the reaction 4-CDP-2-C-methyl-D-erythritol + ATP = 4-CDP-2-C-methyl-D-erythritol 2-phosphate + ADP + H(+). It participates in isoprenoid biosynthesis; isopentenyl diphosphate biosynthesis via DXP pathway; isopentenyl diphosphate from 1-deoxy-D-xylulose 5-phosphate: step 3/6. In terms of biological role, catalyzes the phosphorylation of the position 2 hydroxy group of 4-diphosphocytidyl-2C-methyl-D-erythritol. This chain is 4-diphosphocytidyl-2-C-methyl-D-erythritol kinase, found in Polaromonas naphthalenivorans (strain CJ2).